Reading from the N-terminus, the 326-residue chain is MAEGLVLKGIMRAHTDIVTAIATPIDNSDIIVTASRDKSIILWKLTKDDKSYGVAQRRLTGHSHFVEDVVLSSDGQFALSGSWDGELRLWDLATGETTRRFVGHTKDVLSVAFSTDNRQIVSASRDRTIKLWNTLGECKYTISEGDGHKEWVSCVRFSPNTLVPTIVSASWDKTVKVWNLQNCKLRNSLVGHSGYLNTVAVSPDGSLCASGGKDGVILLWDLAEGKKLYSLEAGSIIHSLCFSPNRYWLCAATENSIRIWDLESKSVVEDLKVDLKSEAEKNEGGVGTGNQKKVIYCTSLNWSADGSTLFSGYTDGVVRVWGIGRY.

WD repeat units lie at residues 13-53 (AHTD…KSYG), 61-100 (GHSH…TTRR), 103-142 (GHTK…KYTI), 147-188 (GHKE…LRNS), 191-230 (GHSG…KLYS), 232-270 (EAGS…VVED), and 290-326 (NQKK…IGRY).

The protein belongs to the WD repeat G protein beta family. Ribosomal protein RACK1 subfamily. In terms of assembly, homodimer and heterodimer with RACK1A or RACK1B. Interacts with GB1, MEKK1, MKK4, MKK5, MPK3 and MPK6, but not with GPA1 or MPK4. In terms of tissue distribution, widely expressed.

Functionally, minor component of the RACK1 regulatory proteins that play a role in multiple signal transduction pathways. Involved in multiple hormone responses and developmental processes. MAPK cascade scaffolding protein involved in the protease IV and ArgC signaling pathway but not the flg22 pathway. This chain is Small ribosomal subunit protein RACK1x, found in Arabidopsis thaliana (Mouse-ear cress).